The sequence spans 256 residues: Thiazole synthase (256 aa).

The active-site Schiff-base intermediate with DXP is the K95. Residues G156, 182 to 183 (AG), and 204 to 205 (NT) contribute to the 1-deoxy-D-xylulose 5-phosphate site.

This sequence belongs to the ThiG family. In terms of assembly, homotetramer. Forms heterodimers with either ThiH or ThiS.

It is found in the cytoplasm. The enzyme catalyses [ThiS sulfur-carrier protein]-C-terminal-Gly-aminoethanethioate + 2-iminoacetate + 1-deoxy-D-xylulose 5-phosphate = [ThiS sulfur-carrier protein]-C-terminal Gly-Gly + 2-[(2R,5Z)-2-carboxy-4-methylthiazol-5(2H)-ylidene]ethyl phosphate + 2 H2O + H(+). It participates in cofactor biosynthesis; thiamine diphosphate biosynthesis. Catalyzes the rearrangement of 1-deoxy-D-xylulose 5-phosphate (DXP) to produce the thiazole phosphate moiety of thiamine. Sulfur is provided by the thiocarboxylate moiety of the carrier protein ThiS. In vitro, sulfur can be provided by H(2)S. This chain is Thiazole synthase, found in Escherichia coli O7:K1 (strain IAI39 / ExPEC).